Reading from the N-terminus, the 79-residue chain is Small serum protein 3 (79 aa).

The signal sequence occupies residues M1–G19. 3 disulfides stabilise this stretch: C21–C72, C39–C64, and C62–C71.

The protein resides in the secreted. Its function is as follows. Shows an slight inhibitory effect toward the metalloproteinase brevilysin H6, but does not inhibit the metalloproteinases thermolysin, HR1A and HR1B. The chain is Small serum protein 3 from Protobothrops flavoviridis (Habu).